The following is a 123-amino-acid chain: uncharacterized protein (123 aa).

Transmembrane regions (helical) follow at residues Val7–Val29, Phe44–Ile66, and Leu79–Ala101.

The protein localises to the cell membrane. This is an uncharacterized protein from Bacillus subtilis (strain 168).